A 343-amino-acid chain; its full sequence is Tetraacyldisaccharide 4'-kinase (343 aa).

Position 47–54 (47–54) interacts with ATP; it reads SVGGTGKT.

It belongs to the LpxK family.

The catalysed reaction is a lipid A disaccharide + ATP = a lipid IVA + ADP + H(+). Its pathway is glycolipid biosynthesis; lipid IV(A) biosynthesis; lipid IV(A) from (3R)-3-hydroxytetradecanoyl-[acyl-carrier-protein] and UDP-N-acetyl-alpha-D-glucosamine: step 6/6. Functionally, transfers the gamma-phosphate of ATP to the 4'-position of a tetraacyldisaccharide 1-phosphate intermediate (termed DS-1-P) to form tetraacyldisaccharide 1,4'-bis-phosphate (lipid IVA). The polypeptide is Tetraacyldisaccharide 4'-kinase (Flavobacterium psychrophilum (strain ATCC 49511 / DSM 21280 / CIP 103535 / JIP02/86)).